The following is a 29-amino-acid chain: Cytochrome b6-f complex subunit 8 (29 aa).

A helical membrane pass occupies residues Met3–Val23.

This sequence belongs to the PetN family. As to quaternary structure, the 4 large subunits of the cytochrome b6-f complex are cytochrome b6, subunit IV (17 kDa polypeptide, PetD), cytochrome f and the Rieske protein, while the 4 small subunits are PetG, PetL, PetM and PetN. The complex functions as a dimer.

It localises to the plastid. Its subcellular location is the chloroplast thylakoid membrane. Its function is as follows. Component of the cytochrome b6-f complex, which mediates electron transfer between photosystem II (PSII) and photosystem I (PSI), cyclic electron flow around PSI, and state transitions. The sequence is that of Cytochrome b6-f complex subunit 8 from Cucumis sativus (Cucumber).